The sequence spans 509 residues: Nucleoprotein (509 aa).

The ncore stretch occupies residues 1 to 404 (MSSVLKAYER…ANTLAKLTTA (404 aa)). The RNA site is built by Lys-180, Arg-195, Tyr-260, Tyr-350, and Arg-354. Residues 405–509 (NRGADTRGGV…LNAALGDLDI (105 aa)) form a ntail region. Residues 452–477 (GTHDDEMPPLEEEEEDDTSAGPRTGP) form a disordered region. The segment covering 458-469 (MPPLEEEEEDDT) has biased composition (acidic residues).

It belongs to the paramyxoviruses nucleocapsid family. In terms of assembly, homomultimer; forms the nucleocapsid. Binds to the viral genomic RNA. N0 interacts with the phosphoprotein (via N-terminus); this interaction allows P to chaperon N0 to avoid N polymerization before encapsidation. Interacts as N-RNA template with the phosphoprotein (via C-terminus); this interaction positions the polymerase on the template.

It is found in the virion. It localises to the host cytoplasm. In terms of biological role, forms the helical nucleocapsid (NC), protecting the genome from nucleases. The encapsidated genomic RNA serves as template for transcription and replication; encapsidation by N is coupled to RNA synthesis. Forms the encapsidation complex with the phosphoprotein protein P. Before encapsidation, the newly synthesized free N protein, so-called N0, is chaperoned by P. The chain is Nucleoprotein (NP) from Canis lupus familiaris (Dog).